The chain runs to 129 residues: Glycerol-3-phosphate cytidylyltransferase (129 aa).

Residues 9–10 (TF) and 14–17 (HYGH) each bind CTP. K44 lines the substrate pocket. K46 contacts CTP. Residue K77 participates in substrate binding. Position 113 to 120 (113 to 120 (RTDGISTT)) interacts with CTP.

It belongs to the cytidylyltransferase family. In terms of assembly, homodimer.

The protein localises to the cytoplasm. It catalyses the reaction sn-glycerol 3-phosphate + CTP + H(+) = CDP-glycerol + diphosphate. It participates in cell wall biogenesis; poly(ribitol phosphate) teichoic acid biosynthesis. Catalyzes the transfer of the cytidylyl group of CTP to sn-glycerol 3-phosphate so the activated glycerol 3-phosphate can be used for teichoic acid synthesis, via incorporation into both the linkage unit by TarB and TarF. In Bacillus spizizenii (strain ATCC 23059 / NRRL B-14472 / W23) (Bacillus subtilis subsp. spizizenii), this protein is Glycerol-3-phosphate cytidylyltransferase (tarD).